The primary structure comprises 87 residues: RNA-binding protein Hfq (87 aa).

The region spanning 9 to 68 (DPFLNALRRERIPVSIYLVNGIKLQGQIESFDQFVILLKNTVNQMVYKHAISTVVPARPV) is the Sm domain. A disordered region spans residues 65-87 (ARPVSHHSGDRPASDRPAEKSEE). Positions 71–87 (HSGDRPASDRPAEKSEE) are enriched in basic and acidic residues.

Belongs to the Hfq family.

RNA chaperone that binds small regulatory RNA (sRNAs) and mRNAs to facilitate mRNA translational regulation in response to envelope stress, environmental stress and changes in metabolite concentrations. Also binds with high specificity to tRNAs. Essential for virulence in the suckling mouse model of cholera pathogenesis. The protein is RNA-binding protein Hfq of Vibrio cholerae serotype O1 (strain ATCC 39315 / El Tor Inaba N16961).